A 538-amino-acid polypeptide reads, in one-letter code: Beta-1-syntrophin (538 aa).

Alanine 2 is modified (N-acetylalanine). PH domains follow at residues 19–298 and 322–433; these read RAQR…SNVN and EIRH…QGCH. A phosphoserine mark is found at serine 87, serine 126, and serine 205. Positions 112–195 constitute a PDZ domain; it reads GVKVLKQELG…EVLLEVKYMR (84 aa). The tract at residues 205 to 237 is disordered; the sequence is SPVSEIGWETPPPESPRLGGSTSDPPSSQSFSF. The residue at position 214 (threonine 214) is a Phosphothreonine. Serine 219, serine 232, serine 236, and serine 389 each carry phosphoserine. A compositionally biased stretch (low complexity) spans 225–236; that stretch reads STSDPPSSQSFS. Residues 482-538 form the SU domain; that stretch reads PYEKLKMSSDDGIRMLYLDFGGKDGEIQLDLHSCPKPIVFIIHSFLSAKITRLGLVA. Positions 518–538 are calmodulin-binding; it reads PIVFIIHSFLSAKITRLGLVA.

The protein belongs to the syntrophin family. In terms of assembly, monomer and homodimer. Interacts with the other members of the syntrophin family SNTA1 and SNTB2; with the sodium channel proteins SCN4A and SCN5A. Interacts with the viral HTLV-1 TAX protein and with dystrophin protein DMD and related proteins DTNA and UTRN. Interacts with DTNB. In terms of processing, phosphorylated by CaM-kinase II. As to expression, ubiquitous.

It localises to the cell membrane. The protein localises to the sarcolemma. Its subcellular location is the cell junction. It is found in the cytoplasm. The protein resides in the cytoskeleton. In terms of biological role, adapter protein that binds to and probably organizes the subcellular localization of a variety of membrane proteins. May link various receptors to the actin cytoskeleton and the dystrophin glycoprotein complex. The protein is Beta-1-syntrophin (SNTB1) of Homo sapiens (Human).